The sequence spans 140 residues: uncharacterized protein (140 aa).

A compositionally biased stretch (basic and acidic residues) spans M1 to G15. The disordered stretch occupies residues M1–G34.

This is an uncharacterized protein from Gallus gallus (Chicken).